A 605-amino-acid chain; its full sequence is Probable serine/threonine-protein kinase DDB_G0286481 (605 aa).

A helical membrane pass occupies residues 5 to 25; sequence YQIFFLLYLLCILYVISCGYI. The N-linked (GlcNAc...) asparagine glycan is linked to Asn53. 2 stretches are compositionally biased toward low complexity: residues 54 to 81 and 89 to 104; these read SSNNNNNNNNNNNNNNNNNNNNNNNNNN and NCNNNSSNNNSDNKSN. A disordered region spans residues 54–170; the sequence is SSNNNNNNNN…LGGSMGSGSQ (117 aa). Residues Asn92, Asn93, Asn97, and Asn101 are each glycosylated (N-linked (GlcNAc...) asparagine). Positions 105–123 are enriched in basic residues; the sequence is IKNKQHHHHSNFRNRRGKS. Asn127 carries N-linked (GlcNAc...) asparagine glycosylation. Residues 144 to 155 show a composition bias toward polar residues; sequence QSSSYDTSELHQ. The N-linked (GlcNAc...) asparagine glycan is linked to Asn280. The Protein kinase domain occupies 312 to 597; the sequence is YEVIQKIGRG…AKEAMKHPYF (286 aa). Residues 318-326 and Lys341 each bind ATP; that span reads IGRGKYSEV. Asn390 carries N-linked (GlcNAc...) asparagine glycosylation. Catalysis depends on Asp429, which acts as the Proton acceptor. Asn601 carries an N-linked (GlcNAc...) asparagine glycan.

This sequence belongs to the protein kinase superfamily. CMGC Ser/Thr protein kinase family.

The protein resides in the membrane. The enzyme catalyses L-seryl-[protein] + ATP = O-phospho-L-seryl-[protein] + ADP + H(+). It catalyses the reaction L-threonyl-[protein] + ATP = O-phospho-L-threonyl-[protein] + ADP + H(+). This is Probable serine/threonine-protein kinase DDB_G0286481 from Dictyostelium discoideum (Social amoeba).